Here is a 160-residue protein sequence, read N- to C-terminus: SsrA-binding protein (160 aa).

Belongs to the SmpB family.

It is found in the cytoplasm. Functionally, required for rescue of stalled ribosomes mediated by trans-translation. Binds to transfer-messenger RNA (tmRNA), required for stable association of tmRNA with ribosomes. tmRNA and SmpB together mimic tRNA shape, replacing the anticodon stem-loop with SmpB. tmRNA is encoded by the ssrA gene; the 2 termini fold to resemble tRNA(Ala) and it encodes a 'tag peptide', a short internal open reading frame. During trans-translation Ala-aminoacylated tmRNA acts like a tRNA, entering the A-site of stalled ribosomes, displacing the stalled mRNA. The ribosome then switches to translate the ORF on the tmRNA; the nascent peptide is terminated with the 'tag peptide' encoded by the tmRNA and targeted for degradation. The ribosome is freed to recommence translation, which seems to be the essential function of trans-translation. This Cronobacter sakazakii (strain ATCC BAA-894) (Enterobacter sakazakii) protein is SsrA-binding protein.